An 83-amino-acid polypeptide reads, in one-letter code: Small ribosomal subunit protein eS21 (83 aa).

Belongs to the eukaryotic ribosomal protein eS21 family. As to quaternary structure, component of the 40S small ribosomal subunit.

It is found in the cytoplasm. The protein resides in the cytosol. It localises to the rough endoplasmic reticulum. The polypeptide is Small ribosomal subunit protein eS21 (RpS21) (Spodoptera frugiperda (Fall armyworm)).